Here is a 217-residue protein sequence, read N- to C-terminus: Large ribosomal subunit protein uL29m (217 aa).

This sequence belongs to the universal ribosomal protein uL29 family. In terms of assembly, component of the mitochondrial large ribosomal subunit. Mature mitochondrial ribosomes consist of a small (37S) and a large (54S) subunit. The 37S subunit contains at least 33 different proteins and 1 molecule of RNA (15S). The 54S subunit contains at least 45 different proteins and 1 molecule of RNA (21S).

Its subcellular location is the mitochondrion. This Neosartorya fischeri (strain ATCC 1020 / DSM 3700 / CBS 544.65 / FGSC A1164 / JCM 1740 / NRRL 181 / WB 181) (Aspergillus fischerianus) protein is Large ribosomal subunit protein uL29m (mrpl4).